Reading from the N-terminus, the 196-residue chain is Protein hunchback (196 aa).

3 disordered regions span residues Ser16–Asn56, Leu63–Met82, and Leu156–Ala196. Basic residues predominate over residues His17–His29. 2 stretches are compositionally biased toward low complexity: residues Ser33 to Gln43 and Gln65 to Gln80. A compositionally biased stretch (basic and acidic residues) spans Glu177–Ala196.

Belongs to the hunchback C2H2-type zinc-finger protein family.

Its subcellular location is the nucleus. In terms of biological role, gap class segmentation protein that controls development of head structures. This is Protein hunchback (hb) from Drosophila adunca (Fruit fly).